The chain runs to 652 residues: Sodium-dependent nutrient amino acid transporter 1 (652 aa).

Residues 1-54 form a disordered region; that stretch reads MELKGVHQQNGTSNGTGAVGAEGESAPPTAPATAEAAASLETTTEKVDAEQQKP. The Cytoplasmic segment spans residues 1–58; sequence MELKGVHQQNGTSNGTGAVGAEGESAPPTAPATAEAAASLETTTEKVDAEQQKPERTN. The span at 7–16 shows a compositional bias: polar residues; the sequence is HQQNGTSNGT. Over residues 21–42 the composition is skewed to low complexity; sequence AEGESAPPTAPATAEAAASLET. Over residues 43 to 54 the composition is skewed to basic and acidic residues; the sequence is TTEKVDAEQQKP. The next 4 helical transmembrane spans lie at 59–79, 92–112, 130–150, and 155–175; these read WGNGLEFLMSCISVSVGLGNV, GAFLIPYIIVLFLIGKPMYYL, VVPGFVGVGYGQAFATICIIT, and LLALTLYYLFVSFQSVLPWSY. N-linked (GlcNAc...) asparagine glycans are attached at residues Asn-201 and Asn-204. The next 9 membrane-spanning stretches (helical) occupy residues 240 to 260, 269 to 289, 318 to 338, 352 to 372, 412 to 432, 458 to 478, 485 to 505, 527 to 547, and 564 to 584; these read PDWKLTLALFVSWVVIFLVIM, AAYFLALFPYVVLFILLVRAV, AVVQCFFSLAVGSGPIIMFAS, IVTTLDTLTSLLGGITIFAIL, LFSVLFFFMLFVLGIGSIVAL, ICGFLMGLVYVTPGGQWILTL, TYVVFILAIFELAGIVWIYGM, CWSFFTPVMMIVIFIYSMVTI, and AGWLLFGIGAAQFPLWWMWYI.

It belongs to the sodium:neurotransmitter symporter (SNF) (TC 2.A.22) family.

It is found in the membrane. Functionally, unusual broad substrate spectrum amino acid:sodium cotransporter that promotes absorption of the D isomers of essential amino acids. Neutral amino acids are the preferred substrates, especially methionine and phenylalanine. The polypeptide is Sodium-dependent nutrient amino acid transporter 1 (Drosophila persimilis (Fruit fly)).